A 428-amino-acid polypeptide reads, in one-letter code: GTPase Obg (428 aa).

Residues 1–158 (MFVDQVQVEV…RFIKLELKVL (158 aa)) enclose the Obg domain. An OBG-type G domain is found at 159–333 (ADVGLVGFPS…LMHKTAEVLK (175 aa)). GTP is bound by residues 165–172 (GFPSVGKS), 190–194 (FTTLV), 212–215 (DLPG), 282–285 (TKMD), and 314–316 (SSL). Mg(2+) contacts are provided by serine 172 and threonine 192. In terms of domain architecture, OCT spans 350 to 428 (YKYQPEPALK…IDDFTFEFVE (79 aa)).

It belongs to the TRAFAC class OBG-HflX-like GTPase superfamily. OBG GTPase family. As to quaternary structure, monomer. The cofactor is Mg(2+).

The protein resides in the cytoplasm. Functionally, an essential GTPase which binds GTP, GDP and possibly (p)ppGpp with moderate affinity, with high nucleotide exchange rates and a fairly low GTP hydrolysis rate. Plays a role in control of the cell cycle, stress response, ribosome biogenesis and in those bacteria that undergo differentiation, in morphogenesis control. This Lacticaseibacillus casei (strain BL23) (Lactobacillus casei) protein is GTPase Obg.